The following is a 334-amino-acid chain: Dihydroorotate dehydrogenase (quinone) (334 aa).

Residues Ala-59 to Lys-63 and Thr-83 each bind FMN. Lys-63 lines the substrate pocket. Asn-108–Phe-112 is a binding site for substrate. The FMN site is built by Asn-136 and Asn-169. Asn-169 contacts substrate. The Nucleophile role is filled by Ser-172. Asn-174 is a binding site for substrate. 2 residues coordinate FMN: Lys-214 and Thr-242. A substrate-binding site is contributed by Asn-243 to Thr-244. FMN is bound by residues Gly-265, Gly-294, and Tyr-315 to Ser-316.

The protein belongs to the dihydroorotate dehydrogenase family. Type 2 subfamily. As to quaternary structure, monomer. It depends on FMN as a cofactor.

The protein resides in the cell membrane. The enzyme catalyses (S)-dihydroorotate + a quinone = orotate + a quinol. It participates in pyrimidine metabolism; UMP biosynthesis via de novo pathway; orotate from (S)-dihydroorotate (quinone route): step 1/1. Catalyzes the conversion of dihydroorotate to orotate with quinone as electron acceptor. The protein is Dihydroorotate dehydrogenase (quinone) of Acinetobacter baumannii (strain SDF).